Here is a 345-residue protein sequence, read N- to C-terminus: L-threonine 3-dehydrogenase (345 aa).

C39 contacts Zn(2+). Residues T41 and H44 each act as charge relay system in the active site. Positions 64, 65, 94, 97, 100, and 108 each coordinate Zn(2+). Residues I176, D196, R201, 263–265 (LGI), and 287–288 (VY) each bind NAD(+).

It belongs to the zinc-containing alcohol dehydrogenase family. Homotetramer. It depends on Zn(2+) as a cofactor.

It localises to the cytoplasm. The enzyme catalyses L-threonine + NAD(+) = (2S)-2-amino-3-oxobutanoate + NADH + H(+). Its pathway is amino-acid degradation; L-threonine degradation via oxydo-reductase pathway; glycine from L-threonine: step 1/2. Functionally, catalyzes the NAD(+)-dependent oxidation of L-threonine to 2-amino-3-ketobutyrate. In Anaeromyxobacter dehalogenans (strain 2CP-1 / ATCC BAA-258), this protein is L-threonine 3-dehydrogenase.